Reading from the N-terminus, the 131-residue chain is Lymphocyte antigen 6E (131 aa).

A signal peptide spans 1–20 (MKIFLPVLLAALLGVERASS). The 81-residue stretch at 21–101 (LMCFSCLNQK…CCQSFLCNFS (81 aa)) folds into the UPAR/Ly6 domain. Intrachain disulfides connect C23–C48, C26–C35, C41–C71, C75–C92, and C93–C98. The N-linked (GlcNAc...) asparagine glycan is linked to N99. A lipid anchor (GPI-anchor amidated serine) is attached at S101. A propeptide spans 102–131 (AADGGLRASVTLLGAGLLLSLLPALLRFGP) (removed in mature form).

As to quaternary structure, interacts with CHRNA4. Widely expressed, predominantly in liver, kidney, ovary, spleen and peripheral blood Leukocytes.

The protein localises to the cell membrane. GPI-anchored cell surface protein that regulates T-lymphocytes proliferation, differentiation, and activation. Regulates the T-cell receptor (TCR) signaling by interacting with component CD3Z/CD247 at the plasma membrane, leading to CD3Z/CD247 phosphorylation modulation. Restricts the entry of human coronaviruses, including SARS-CoV, MERS-CoV and SARS-CoV-2, by interfering with spike protein-mediated membrane fusion. Also plays an essential role in placenta formation by acting as the main receptor for syncytin-A (SynA). Therefore, participates in the normal fusion of syncytiotrophoblast layer I (SynT-I) and in the proper morphogenesis of both fetal and maternal vasculatures within the placenta. May also act as a modulator of nicotinic acetylcholine receptors (nAChRs) activity. In terms of biological role, (Microbial infection) Promotes entry, likely through an enhanced virus-cell fusion process, of various viruses including HIV-1, West Nile virus, dengue virus and Zika virus. In contrast, the paramyxovirus PIV5, which enters at the plasma membrane, does not require LY6E. Mechanistically, adopts a microtubule-like organization upon viral infection and enhances viral uncoating after endosomal escape. The protein is Lymphocyte antigen 6E of Homo sapiens (Human).